The following is a 258-amino-acid chain: Small ribosomal subunit protein eS1 (258 aa).

The segment at Val-235–Val-258 is disordered.

It belongs to the eukaryotic ribosomal protein eS1 family. Component of the small ribosomal subunit. Mature ribosomes consist of a small (40S) and a large (60S) subunit. The 40S subunit contains about 33 different proteins and 1 molecule of RNA (18S). The 60S subunit contains about 49 different proteins and 3 molecules of RNA (28S, 5.8S and 5S).

It is found in the cytoplasm. This chain is Small ribosomal subunit protein eS1, found in Trichoplax adhaerens (Trichoplax reptans).